Reading from the N-terminus, the 360-residue chain is Photosystem II protein D1 1 (360 aa).

The Cytoplasmic portion of the chain corresponds to 2–31 (TTTLQRRESANLWERFCNWVTSTDNRLYVG). A helical transmembrane segment spans residues 32 to 53 (WFGVIMIPTLLAATICFVIAFI). Over 54–110 (AAPPVDIDGIREPVSGSLLYGNNIITGAVVPSSNAIGLHFYPIWEAASLDEWLYNGG) the chain is Lumenal. Residues 111–132 (PYQLIIFHFLLGASCYMGRQWE) traverse the membrane as a helical segment. His118 is a binding site for chlorophyll a. 2 residues coordinate pheophytin a: Tyr126 and Gln130. Topologically, residues 133-142 (LSYRLGMRPW) are cytoplasmic. A helical transmembrane segment spans residues 143-163 (ICVAYSAPLASAFAVFLIYPI). Tyr147 is a binding site for pheophytin a. At 164 to 191 (GQGSFSDGMPLGISGTFNFMIVFQAEHN) the chain is on the lumenal side. [CaMn4O5] cluster contacts are provided by Asp170 and Glu189. A helical transmembrane segment spans residues 192 to 217 (ILMHPFHQLGVAGVFGGALFCAMHGS). His198 contributes to the chlorophyll a binding site. A quinone is bound by residues His215 and 264-265 (SF). His215 lines the Fe cation pocket. At 218 to 272 (LVTSSLIRETTETESANYGYKFGQEEETYNIVAAHGYFGRLIFQYASFNNSRSLH) the chain is on the cytoplasmic side. A Fe cation-binding site is contributed by His272. The chain crosses the membrane as a helical span at residues 273-295 (FFLAAWPVVGVWFTALGISTMAF). Residues 296–344 (NLNGFNFNHSVIDAKGNVINTWADIINRANLGMEVMHERNAHNFPLDLA) are Lumenal-facing. 4 residues coordinate [CaMn4O5] cluster: His332, Glu333, Asp342, and Ala344. The propeptide occupies 345–360 (SAESAPVAMIAPSING).

Belongs to the reaction center PufL/M/PsbA/D family. PSII is composed of 1 copy each of membrane proteins PsbA, PsbB, PsbC, PsbD, PsbE, PsbF, PsbH, PsbI, PsbJ, PsbK, PsbL, PsbM, PsbT, PsbX, PsbY, PsbZ, Psb30/Ycf12, peripheral proteins PsbO, CyanoQ (PsbQ), PsbU, PsbV and a large number of cofactors. It forms dimeric complexes. Precursor protein interacts with Ycf48. Part of a photosystem II (PSII) assembly intermediate complex PSII-I; crystallized from a strain deleted of psbJ, it forms monomeric PSII before addition of the oxygen evolving complex. PSII-I includes 3 assembly factors not found in mature PSII (Psb27, Psb28 and Psb34). In PSII-I the C-terminus of D1 (this subunit) is already processed but not yet found at its final position. Requires The D1/D2 heterodimer binds P680, chlorophylls that are the primary electron donor of PSII, and subsequent electron acceptors. It shares a non-heme iron and each subunit binds pheophytin, quinone, additional chlorophylls, carotenoids and lipids. D1 provides most of the ligands for the Mn4-Ca-O5 cluster of the oxygen-evolving complex (OEC). There is also a Cl(-1) ion associated with D1 and D2, which is required for oxygen evolution. PSII binds additional chlorophylls, carotenoids and specific lipids. as cofactor. In terms of processing, C-terminally processed by CtpA; processing is essential to allow assembly of the oxygen-evolving complex and thus photosynthetic growth. Tyr-161 forms a radical intermediate that is referred to as redox-active TyrZ, YZ or Y-Z.

It localises to the cellular thylakoid membrane. The enzyme catalyses 2 a plastoquinone + 4 hnu + 2 H2O = 2 a plastoquinol + O2. Functionally, photosystem II (PSII) is a light-driven water:plastoquinone oxidoreductase that uses light energy to abstract electrons from H(2)O, generating O(2) and a proton gradient subsequently used for ATP formation. It consists of a core antenna complex that captures photons, and an electron transfer chain that converts photonic excitation into a charge separation. The D1/D2 (PsbA/PsbD) reaction center heterodimer binds P680, the primary electron donor of PSII as well as several subsequent electron acceptors. This chain is Photosystem II protein D1 1, found in Thermosynechococcus vestitus (strain NIES-2133 / IAM M-273 / BP-1).